A 389-amino-acid polypeptide reads, in one-letter code: Chalcone synthase 1 (389 aa).

Cys164 is an active-site residue.

It belongs to the thiolase-like superfamily. Chalcone/stilbene synthases family.

It carries out the reaction (E)-4-coumaroyl-CoA + 3 malonyl-CoA + 3 H(+) = 2',4,4',6'-tetrahydroxychalcone + 3 CO2 + 4 CoA. It participates in secondary metabolite biosynthesis; flavonoid biosynthesis. In terms of biological role, the primary product of this enzyme is 4,2',4',6'-tetrahydroxychalcone (also termed naringenin-chalcone or chalcone) which can under specific conditions spontaneously isomerize into naringenin. The chain is Chalcone synthase 1 (CHS1) from Medicago sativa (Alfalfa).